The primary structure comprises 308 residues: Palmitoyltransferase ZDHHC7 (308 aa).

The Cytoplasmic portion of the chain corresponds to 1-50; the sequence is MQPSGHRLRDIEHHPLLTDNDNYDSASSSSSEADMADRVWFIRDGCGMVC. A helical membrane pass occupies residues 51–71; the sequence is AVMTWLLVVYADFVVTFVMLL. Over 72–75 the chain is Lumenal; sequence PSKD. Residues 76–96 form a helical membrane-spanning segment; it reads FWYSVVNGVLFNCLAVLALSS. The Cytoplasmic segment spans residues 97-173; the sequence is HLRTMLTDPG…NNCVGEKNQR (77 aa). The DHHC domain maps to 130–180; that stretch reads YKCPKCCCIKPERAHHCSICKRCIRKMDHHCPWVNNCVGEKNQRFFVLFTM. The active-site S-palmitoyl cysteine intermediate is the Cys160. Residues 174-194 form a helical membrane-spanning segment; the sequence is FFVLFTMYIALSSIHALILCG. Residues 195 to 217 are Lumenal-facing; sequence LQFISCVRGQWTECSDFSPPITV. The helical transmembrane segment at 218–238 threads the bilayer; that stretch reads ILLVFLCLEGLLFFTFTAVMF. Over 239-308 the chain is Cytoplasmic; sequence GTQIHSICND…TRKGGPEFSV (70 aa).

Belongs to the DHHC palmitoyltransferase family. As to quaternary structure, homooligomers. Heterooligomers with ZDHHC3. Autopalmitoylated. As to expression, widely expressed. Present in Sertoli cells (at protein level).

The protein localises to the golgi apparatus membrane. The catalysed reaction is L-cysteinyl-[protein] + hexadecanoyl-CoA = S-hexadecanoyl-L-cysteinyl-[protein] + CoA. It catalyses the reaction L-cysteinyl-[protein] + tetradecanoyl-CoA = S-tetradecanoyl-L-cysteinyl-[protein] + CoA. It carries out the reaction L-cysteinyl-[protein] + octadecanoyl-CoA = S-octadecanoyl-L-cysteinyl-[protein] + CoA. In terms of biological role, golgi-localized palmitoyltransferase that catalyzes the addition of palmitate onto various protein substrates and therefore functions in several unrelated biological processes. Has no stringent fatty acid selectivity and in addition to palmitate can also transfer onto target proteins myristate from tetradecanoyl-CoA and stearate from octadecanoyl-CoA. Palmitoylates sex steroid hormone receptors, including ESR1, PGR and AR, thereby regulating their targeting to the plasma membrane and their function in rapid intracellular signaling upon binding of sex hormones. Palmitoylates GNAQ, a heterotrimeric G protein, regulating its dynamic localization at the plasma membrane and is thereby involved in GNAQ-dependent G protein-coupled receptor signaling pathways. Also functions in ligand-induced cell death by regulating the FAS signaling pathway through the palmitoylation and stabilization of the receptor at the plasma membrane. In epithelial cells, palmitoylates SCRIB and regulates its localization to the plasma membrane, regulating indirectly cell polarity and differentiation. Also palmitoylates JAM3 and promotes its expression at tight junctions and regulates its function in cell migration. Palmitoylates the glucose transporter GLUT4/SLC2A4 and controls the insulin-dependent translocation of GLUT4 to the plasma membrane. In brain, could also palmitoylate SNAP25 and DLG4/PSD95. Could also palmitoylate DNAJC5 and regulate its localization to the Golgi membrane. Could also palmitoylate NCDN. May play a role in follicle stimulation hormone (FSH) activation of testicular Sertoli cells. Activates pyroptosis by catalyzing palmitoylation of gasdermin-D (GSDMD). This is Palmitoyltransferase ZDHHC7 from Rattus norvegicus (Rat).